Here is a 92-residue protein sequence, read N- to C-terminus: C-C motif chemokine 3 (92 aa).

The N-terminal stretch at 1–26 (MQVSTAALAVLLCTVALCNRISATFA) is a signal peptide. 2 disulfides stabilise this stretch: C33–C57 and C34–C73.

Belongs to the intercrine beta (chemokine CC) family. Self-associates. Also heterodimer of MIP-1-alpha(4-69) and MIP-1-beta(3-69). Interacts with CCR1.

It localises to the secreted. In terms of biological role, monokine with inflammatory and chemokinetic properties. Binds to CCR1, CCR4 and CCR5. One of the major HIV-suppressive factors produced by CD8+ T-cells. Recombinant MIP-1-alpha induces a dose-dependent inhibition of different strains of HIV-1, HIV-2, and simian immunodeficiency virus (SIV). In Macaca mulatta (Rhesus macaque), this protein is C-C motif chemokine 3 (CCL3).